We begin with the raw amino-acid sequence, 479 residues long: Aspartyl/glutamyl-tRNA(Asn/Gln) amidotransferase subunit B (479 aa).

It belongs to the GatB/GatE family. GatB subfamily. In terms of assembly, heterotrimer of A, B and C subunits.

It carries out the reaction L-glutamyl-tRNA(Gln) + L-glutamine + ATP + H2O = L-glutaminyl-tRNA(Gln) + L-glutamate + ADP + phosphate + H(+). It catalyses the reaction L-aspartyl-tRNA(Asn) + L-glutamine + ATP + H2O = L-asparaginyl-tRNA(Asn) + L-glutamate + ADP + phosphate + 2 H(+). Functionally, allows the formation of correctly charged Asn-tRNA(Asn) or Gln-tRNA(Gln) through the transamidation of misacylated Asp-tRNA(Asn) or Glu-tRNA(Gln) in organisms which lack either or both of asparaginyl-tRNA or glutaminyl-tRNA synthetases. The reaction takes place in the presence of glutamine and ATP through an activated phospho-Asp-tRNA(Asn) or phospho-Glu-tRNA(Gln). This Streptococcus pyogenes serotype M4 (strain MGAS10750) protein is Aspartyl/glutamyl-tRNA(Asn/Gln) amidotransferase subunit B.